The following is a 209-amino-acid chain: Thiamine-phosphate synthase (209 aa).

4-amino-2-methyl-5-(diphosphooxymethyl)pyrimidine is bound by residues Q36–K40 and N68. 2 residues coordinate Mg(2+): D69 and D88. S107 contributes to the 4-amino-2-methyl-5-(diphosphooxymethyl)pyrimidine binding site. T133 to S135 serves as a coordination point for 2-[(2R,5Z)-2-carboxy-4-methylthiazol-5(2H)-ylidene]ethyl phosphate. Residue K136 coordinates 4-amino-2-methyl-5-(diphosphooxymethyl)pyrimidine. Residues G164 and I184–T185 each bind 2-[(2R,5Z)-2-carboxy-4-methylthiazol-5(2H)-ylidene]ethyl phosphate.

It belongs to the thiamine-phosphate synthase family. Requires Mg(2+) as cofactor.

It catalyses the reaction 2-[(2R,5Z)-2-carboxy-4-methylthiazol-5(2H)-ylidene]ethyl phosphate + 4-amino-2-methyl-5-(diphosphooxymethyl)pyrimidine + 2 H(+) = thiamine phosphate + CO2 + diphosphate. The catalysed reaction is 2-(2-carboxy-4-methylthiazol-5-yl)ethyl phosphate + 4-amino-2-methyl-5-(diphosphooxymethyl)pyrimidine + 2 H(+) = thiamine phosphate + CO2 + diphosphate. It carries out the reaction 4-methyl-5-(2-phosphooxyethyl)-thiazole + 4-amino-2-methyl-5-(diphosphooxymethyl)pyrimidine + H(+) = thiamine phosphate + diphosphate. It functions in the pathway cofactor biosynthesis; thiamine diphosphate biosynthesis; thiamine phosphate from 4-amino-2-methyl-5-diphosphomethylpyrimidine and 4-methyl-5-(2-phosphoethyl)-thiazole: step 1/1. Its function is as follows. Condenses 4-methyl-5-(beta-hydroxyethyl)thiazole monophosphate (THZ-P) and 2-methyl-4-amino-5-hydroxymethyl pyrimidine pyrophosphate (HMP-PP) to form thiamine monophosphate (TMP). This Shouchella clausii (strain KSM-K16) (Alkalihalobacillus clausii) protein is Thiamine-phosphate synthase.